Reading from the N-terminus, the 278-residue chain is Large ribosomal subunit protein uL2 (278 aa).

Positions 212–278 (NRHRGIRPQT…IISRKKHKKG (67 aa)) are disordered. Positions 257–278 (YKTRKKKASDKLIISRKKHKKG) are enriched in basic residues.

Belongs to the universal ribosomal protein uL2 family. As to quaternary structure, part of the 50S ribosomal subunit. Forms a bridge to the 30S subunit in the 70S ribosome.

Its function is as follows. One of the primary rRNA binding proteins. Required for association of the 30S and 50S subunits to form the 70S ribosome, for tRNA binding and peptide bond formation. It has been suggested to have peptidyltransferase activity; this is somewhat controversial. Makes several contacts with the 16S rRNA in the 70S ribosome. The polypeptide is Large ribosomal subunit protein uL2 (Helicobacter pylori (strain Shi470)).